The sequence spans 208 residues: Large ribosomal subunit protein bL9 (208 aa).

A disordered region spans residues 161–208; it reads KKRKIEKEVEEGSGTSVDESLKLDSVSDSIDTSGVNSSDKEEENNIIE. Residues 186 to 197 are compositionally biased toward polar residues; sequence VSDSIDTSGVNS.

This sequence belongs to the bacterial ribosomal protein bL9 family.

Binds to the 23S rRNA. This Ehrlichia canis (strain Jake) protein is Large ribosomal subunit protein bL9.